The sequence spans 896 residues: NET1-associated nuclear protein 1 (896 aa).

WD repeat units lie at residues 295–334 (WHID…QQFL), 490–542 (LQDP…TNWN), 552–595 (GISV…SNWC), and 605–645 (NHFS…ESLE).

As to quaternary structure, interacts with snoRNA U3. Interacts with MPP10. Component of the ribosomal small subunit (SSU) processome composed of at least 40 protein subunits and snoRNA U3. In the absence of snoRNA3, forms a complex with other t-UTPs. This complex can associate with pre-18S ribosomal RNAs.

Its subcellular location is the nucleus. The protein localises to the nucleolus. Functionally, involved in nucleolar processing of pre-18S ribosomal RNA. Required for optimal pre-ribosomal RNA transcription by RNA polymerase I together with a subset of U3 proteins required for transcription (t-UTPs). This chain is NET1-associated nuclear protein 1 (NAN1), found in Saccharomyces cerevisiae (strain ATCC 204508 / S288c) (Baker's yeast).